Consider the following 223-residue polypeptide: Ribosome maturation factor RimM (223 aa).

Positions 1–12 (MARRPGSSSRGP) are enriched in low complexity. Disordered stretches follow at residues 1-44 (MARR…DPGL) and 204-223 (ADPP…DDPG). In terms of domain architecture, PRC barrel spans 136–210 (EDEFFLTDLI…KVVADPPDDL (75 aa)).

The protein belongs to the RimM family. In terms of assembly, binds ribosomal protein uS19.

Its subcellular location is the cytoplasm. An accessory protein needed during the final step in the assembly of 30S ribosomal subunit, possibly for assembly of the head region. Essential for efficient processing of 16S rRNA. May be needed both before and after RbfA during the maturation of 16S rRNA. It has affinity for free ribosomal 30S subunits but not for 70S ribosomes. This Methylorubrum extorquens (strain PA1) (Methylobacterium extorquens) protein is Ribosome maturation factor RimM.